The following is a 23-amino-acid chain: Basic phospholipase A2 mangshantoxin (23 aa).

It belongs to the phospholipase A2 family. Group II subfamily. It depends on Ca(2+) as a cofactor. Post-translationally, contains 7 disulfide bonds. As to expression, expressed by the venom gland.

It is found in the secreted. It catalyses the reaction a 1,2-diacyl-sn-glycero-3-phosphocholine + H2O = a 1-acyl-sn-glycero-3-phosphocholine + a fatty acid + H(+). Functionally, snake venom phospholipase A2 (PLA2) that displays presynaptic neurotoxicity. PLA2 catalyzes the calcium-dependent hydrolysis of the 2-acyl groups in 3-sn-phosphoglycerides. The sequence is that of Basic phospholipase A2 mangshantoxin from Protobothrops mangshanensis (Mangshan pitviper).